Reading from the N-terminus, the 1128-residue chain is Membrane-associated guanylate kinase, WW and PDZ domain-containing protein 3 (1128 aa).

One can recognise a PDZ 1 domain in the interval 22–108 (WGGPAGPDPE…PVRLKTVRPG (87 aa)). A Guanylate kinase-like domain is found at 116 to 290 (RHYLSLQFQK…SMDFRNYMSR (175 aa)). Position 123 to 130 (123 to 130 (FQKGSIDH)) interacts with ATP. Residues 184–276 (TYDGNFYGTP…DWMKPVPSYN (93 aa)) are disordered. Pro residues predominate over residues 193-204 (PKPPAEPSPFQP). The span at 238–247 (LPEDEEEEEK) shows a compositional bias: acidic residues. Residues 257 to 267 (ENKEKHSDSSD) show a composition bias toward basic and acidic residues. WW domains are found at residues 295–328 (EPLP…DPRL) and 341–374 (GELP…NPVL). PDZ domains lie at 412–494 (RTSL…TLCR) and 581–657 (TIPL…LILR). Residues 658–688 (GGPPSPTKTGKMKDKQESSGSLEALSDAIPQ) are disordered. 2 PDZ domains span residues 728–810 (DVFL…TVRR) and 852–939 (DVCL…VAEE). Disordered regions lie at residues 939-985 (EEHR…GKEV) and 999-1018 (LAQP…SQAQ). 2 stretches are compositionally biased toward polar residues: residues 946 to 956 (SGTNSAKQSPA) and 965 to 974 (AQSSASSTDR). Residues 1024-1106 (PVELERGPRG…KVLLLLRPGT (83 aa)) enclose the PDZ 6 domain.

The protein belongs to the MAGUK family.

The protein resides in the cell membrane. It is found in the cell junction. It localises to the tight junction. Functionally, acts as a scaffolding protein at cell-cell junctions, thereby regulating various cellular and signaling processes. The chain is Membrane-associated guanylate kinase, WW and PDZ domain-containing protein 3 (MAGI3) from Gallus gallus (Chicken).